We begin with the raw amino-acid sequence, 1285 residues long: Transmembrane channel-like protein 1 (1285 aa).

The disordered stretch occupies residues 1-29 (MQEAARRASLRKEHTPTNEKFGDLSKQDS). Over 1–164 (MQEAARRASL…KIKRIESHFG (164 aa)) the chain is Cytoplasmic. Residues 165 to 202 (SVVSSYFTFLRWIVFVNIMITLIALVFVVLPETLADSV) traverse the membrane as a helical segment. At 203–260 (ANEGRFNRTKTRKQIPANERVHADELAVVWHYDGYLRYSPLFYGYYSDDPFLGNKIKY) the chain is on the extracellular side. Asn-209 is a glycosylation site (N-linked (GalNAc...) asparagine). Residues 261–292 (ALPLAYFMVTLTIFAYSFFAILRKMAANARMS) form a helical membrane-spanning segment. At 293 to 349 (KLSGSKAEQYIFNWKLFTGWDYTIGNSETASNTVMAVVIKLRESIADIKKDAHGKFR) the chain is on the cytoplasmic side. A helical transmembrane segment spans residues 350 to 381 (LLQFSLRVFANIIICAMLGFSIYCIIFAVQKS). Residues 382 to 388 (QVQDDGN) are Extracellular-facing. The chain crosses the membrane as a helical span at residues 389–416 (LFTKNQVPSVVSTITHVFPMIFDLIGKM). Over 417 to 420 (ENYH) the chain is Cytoplasmic. A helical transmembrane segment spans residues 421–455 (PRTALRAHLGRVLILYTVNYITLIFALFEKMTALR). At 456-667 (DRVNSTSTSS…NHDGHNNDIC (212 aa)) the chain is on the extracellular side. Positions 458–488 (VNSTSTSSSHRTKRQQGGWNPNMQRPPPYAS) are disordered. Cys-667 and Cys-816 are joined by a disulfide. The helical transmembrane segment at 668–705 (WETIIGQEIVKLVTMDLIFTILSILVIDLFRGLWIKYC) threads the bilayer. The segment at 696–720 (LFRGLWIKYCSSWWCWDIETTFPEY) is required for interaction with tmie. Topologically, residues 706–724 (SSWWCWDIETTFPEYGEFK) are cytoplasmic. The helical transmembrane segment at 725 to 745 (VAENVLHIINNQGMIWLGLFF) threads the bilayer. Over 746–748 (APL) the chain is Extracellular. Residues 749 to 771 (LPAINNIKLIILMYIRGWAVMTC) traverse the membrane as a helical segment. Positions 766–773 (WAVMTCNV) are required for interaction with tmie. Residues 772–785 (NVPAREIFRASRSS) are Cytoplasmic-facing. A helical membrane pass occupies residues 786 to 809 (NFYLGILLIWLLLCTLPVGFVIAS). At 810–852 (MSPSRSCGPFARYQHFYTVVTREIEKRVDQTVLSYIRHIASPG) the chain is on the extracellular side. Residues 853-886 (VVIPIILFLILIIYFLFSLVRGLREANTDLQAQL) traverse the membrane as a helical segment. The Cytoplasmic segment spans residues 887 to 1285 (VHERTEEKKK…DEDDSPRQID (399 aa)). Disordered stretches follow at residues 940 to 962 (ADHA…DDER) and 1114 to 1285 (TIKE…RQID). Acidic residues predominate over residues 948–961 (SSEESDINEDEDDE). Composition is skewed to basic and acidic residues over residues 1121–1131 (DPGKSDKKQTS), 1146–1156 (DEARALREKMK), and 1167–1182 (TVEE…ESEF). Acidic residues predominate over residues 1197–1208 (TEEENEEEETDS).

Belongs to the TMC family. Homodimer. Interacts with calm-1 and tmie to form the MET channel. As to expression, expressed in the ASH polymodal avoidance neurons. Also expressed in other sensory neurons, including the ADF, ASE, ADL, AQR, PQR, URX and PHA cells.

It localises to the cell membrane. It carries out the reaction Na(+)(in) = Na(+)(out). The enzyme catalyses Ca(2+)(in) = Ca(2+)(out). It catalyses the reaction K(+)(in) = K(+)(out). Its function is as follows. Pore-forming subunit of the mechanotransducer (MET) non-selective cation channel complex. The MET complex is composed of symmetric dimeric MET channels, each channel comprising two copies of pore-forming ion-conducting transmembrane TMC subunits and auxiliary proteins including the transmembrane inner ear protein/tmie, the calcium-binding protein/calm-1 and arrestin domain protein arrd-6. Sodium ions are the most permeable, whereas calcium and potassium have lower indices. Sodium-sensor ion channel that acts specifically in salt taste chemosensation. Required for salt-evoked neuronal activity and behavioral avoidance of high concentrations of NaCl. The sequence is that of Transmembrane channel-like protein 1 (tmc-1) from Caenorhabditis elegans.